A 409-amino-acid chain; its full sequence is Phospholipase ABHD3 (409 aa).

The chain crosses the membrane as a helical; Signal-anchor for type II membrane protein span at residues G26–F46. An AB hydrolase-1 domain is found at P140–I233. Active-site charge relay system residues include S220, D346, and H375.

This sequence belongs to the AB hydrolase superfamily. AB hydrolase 4 family.

It localises to the membrane. The enzyme catalyses a 1,2-diacyl-sn-glycero-3-phosphocholine + H2O = a 1-acyl-sn-glycero-3-phosphocholine + a fatty acid + H(+). The catalysed reaction is a 1,2-diacyl-sn-glycero-3-phosphocholine + H2O = a 2-acyl-sn-glycero-3-phosphocholine + a fatty acid + H(+). It carries out the reaction 1-tetradecanoyl-2-(9Z,12Z-octadecadienoyl)-sn-glycero-3-phosphocholine + H2O = 2-(9Z,12Z-octadecadienoyl)-sn-glycero-3-phosphocholine + tetradecanoate + H(+). It catalyses the reaction 1-tetradecanoyl-2-(9Z,12Z-octadecadienoyl)-sn-glycero-3-phosphocholine + H2O = 1-tetradecanoyl-sn-glycero-3-phosphocholine + (9Z,12Z)-octadecadienoate + H(+). The enzyme catalyses 1-tetradecanoyl-2-(5Z,8Z,11Z,14Z-eicosatetraenoyl)-sn-glycero-3-phosphocholine + H2O = 2-(5Z,8Z,11Z,14Z)-eicosatetraenoyl-sn-glycero-3-phosphocholine + tetradecanoate + H(+). The catalysed reaction is 1-tetradecanoyl-2-(4Z,7Z,10Z,13Z,16Z,19Z-docosahexaenoyl)-sn-glycero-3-phosphocholine + H2O = 2-(4Z,7Z,10Z,13Z,16Z,19Z-docosahexaenoyl)-sn-glycero-3-phosphocholine + tetradecanoate + H(+). It carries out the reaction 1,2-ditetradecanoyl-sn-glycero-3-phosphocholine + H2O = 2-tetradecanoyl-sn-glycero-3-phosphocholine + tetradecanoate + H(+). It catalyses the reaction 1-octadecanoyl-2-acetyl-sn-glycero-3-phosphocholine + H2O = 1-octadecanoyl-sn-glycero-3-phosphocholine + acetate + H(+). The enzyme catalyses 1,2-ditetradecanoyl-sn-glycero-3-phosphocholine + H2O = 1-tetradecanoyl-sn-glycero-3-phosphocholine + tetradecanoate + H(+). The catalysed reaction is 1-octadecanoyl-2-pentanoyl-sn-glycero-3-phosphocholine + H2O = pentanoate + 1-octadecanoyl-sn-glycero-3-phosphocholine + H(+). It carries out the reaction 1-octadecanoyl-2-hexanoyl-sn-glycero-3-phosphocholine + H2O = hexanoate + 1-octadecanoyl-sn-glycero-3-phosphocholine + H(+). It catalyses the reaction 1-octadecanoyl-2-octanoyl-sn-glycero-3-phosphocholine + H2O = 1-octadecanoyl-sn-glycero-3-phosphocholine + octanoate + H(+). The enzyme catalyses 1-octadecanoyl-2-nonanoyl-sn-glycero-3-phosphocholine + H2O = nonanoate + 1-octadecanoyl-sn-glycero-3-phosphocholine + H(+). The catalysed reaction is 1-O-hexadecyl-2-nonadioyl-sn-glycero-3-phosphocholine + H2O = nonanedioate + 1-O-hexadecyl-sn-glycero-3-phosphocholine + H(+). It carries out the reaction 1-hexadecanoyl-2-nonadioyl-sn-glycero-3-phosphocholine + H2O = nonanedioate + 1-hexadecanoyl-sn-glycero-3-phosphocholine + H(+). It catalyses the reaction 1-hexadecanoyl-2-(9-oxononanoyl)-sn-glycero-3-phosphocholine + H2O = 9-oxononanoate + 1-hexadecanoyl-sn-glycero-3-phosphocholine + H(+). The enzyme catalyses 1-hexadecanoyl-2-(5-oxopentanoyl)-sn-glycero-3-phosphocholine + H2O = 5-oxopentanoate + 1-hexadecanoyl-sn-glycero-3-phosphocholine + H(+). The catalysed reaction is 1-hexadecanoyl-2-glutaroyl-sn-glycero-3-phosphocholine + H2O = glutarate + 1-hexadecanoyl-sn-glycero-3-phosphocholine + H(+). It carries out the reaction 1-O-hexadecyl-2-acetyl-sn-glycero-3-phosphocholine + H2O = 1-O-hexadecyl-sn-glycero-3-phosphocholine + acetate + H(+). In terms of biological role, phospholipase that may play a role in phospholipids remodeling. May selectively cleave myristate (C14)-containing phosphatidylcholines through its predominant phospholipase 1 activity, cleaving preferentially acyl groups in sn1 position. In parallel, may have a minor phospholipase 2 activity acting on acyl groups in position sn2. In addition to (C14)-containing phosphatidylcholines, may also act on other medium-chain-containing and oxidatively truncated phospholipids. This Homo sapiens (Human) protein is Phospholipase ABHD3.